The chain runs to 298 residues: 1D-myo-inositol 2-acetamido-2-deoxy-alpha-D-glucopyranoside deacetylase (298 aa).

Zn(2+) contacts are provided by H14, D17, and H148. Residues 277-298 (RGPAGPDGREHDLFAGLDGPAT) form a disordered region.

The protein belongs to the MshB deacetylase family. Requires Zn(2+) as cofactor.

It carries out the reaction 1D-myo-inositol 2-acetamido-2-deoxy-alpha-D-glucopyranoside + H2O = 1D-myo-inositol 2-amino-2-deoxy-alpha-D-glucopyranoside + acetate. Its function is as follows. Catalyzes the deacetylation of 1D-myo-inositol 2-acetamido-2-deoxy-alpha-D-glucopyranoside (GlcNAc-Ins) in the mycothiol biosynthesis pathway. This is 1D-myo-inositol 2-acetamido-2-deoxy-alpha-D-glucopyranoside deacetylase from Nocardia farcinica (strain IFM 10152).